Reading from the N-terminus, the 142-residue chain is Peptide methionine sulfoxide reductase MsrB (142 aa).

The region spanning E10–E132 is the MsrB domain. Zn(2+) is bound by residues C49, C52, C98, and C101. C121 (nucleophile) is an active-site residue.

The protein belongs to the MsrB Met sulfoxide reductase family. The cofactor is Zn(2+).

It carries out the reaction L-methionyl-[protein] + [thioredoxin]-disulfide + H2O = L-methionyl-(R)-S-oxide-[protein] + [thioredoxin]-dithiol. This is Peptide methionine sulfoxide reductase MsrB from Methanosarcina barkeri (strain Fusaro / DSM 804).